We begin with the raw amino-acid sequence, 903 residues long: DNA gyrase subunit A (903 aa).

The 464-residue stretch at 36 to 499 (LPDARDGFKP…AIDDSDDEDL (464 aa)) folds into the Topo IIA-type catalytic domain. Residue Tyr-124 is the O-(5'-phospho-DNA)-tyrosine intermediate of the active site. A GyrA-box motif is present at residues 526 to 532 (QNRGGKG). Positions 881–895 (VDDDSVVKDDAEKQE) are enriched in basic and acidic residues. Residues 881 to 903 (VDDDSVVKDDAEKQEIGPTETEE) are disordered.

This sequence belongs to the type II topoisomerase GyrA/ParC subunit family. In terms of assembly, heterotetramer, composed of two GyrA and two GyrB chains. In the heterotetramer, GyrA contains the active site tyrosine that forms a transient covalent intermediate with DNA, while GyrB binds cofactors and catalyzes ATP hydrolysis.

It localises to the cytoplasm. The catalysed reaction is ATP-dependent breakage, passage and rejoining of double-stranded DNA.. Its function is as follows. A type II topoisomerase that negatively supercoils closed circular double-stranded (ds) DNA in an ATP-dependent manner to modulate DNA topology and maintain chromosomes in an underwound state. Negative supercoiling favors strand separation, and DNA replication, transcription, recombination and repair, all of which involve strand separation. Also able to catalyze the interconversion of other topological isomers of dsDNA rings, including catenanes and knotted rings. Type II topoisomerases break and join 2 DNA strands simultaneously in an ATP-dependent manner. This Fibrobacter succinogenes (strain ATCC 19169 / S85) protein is DNA gyrase subunit A.